The primary structure comprises 338 residues: Phenylalanine--tRNA ligase alpha subunit (338 aa).

Position 253 (glutamate 253) interacts with Mg(2+).

The protein belongs to the class-II aminoacyl-tRNA synthetase family. Phe-tRNA synthetase alpha subunit type 1 subfamily. Tetramer of two alpha and two beta subunits. The cofactor is Mg(2+).

The protein resides in the cytoplasm. The catalysed reaction is tRNA(Phe) + L-phenylalanine + ATP = L-phenylalanyl-tRNA(Phe) + AMP + diphosphate + H(+). The chain is Phenylalanine--tRNA ligase alpha subunit from Legionella pneumophila (strain Paris).